The primary structure comprises 232 residues: MDAREMKIKAAAAALAHVEDGMRLGIGTGSTAEEFVRLLAEKVASGFKVEGVPTSERTARLCVELGVPLKSLDELPALDLTIDGADEVDPALRLIKGGGGALLREKIVAAASERMIVIADESKLVDTLGAYALPIEVNPFGLVSTRIAIEKVAARLGLAGELSLRQSGDGEFTTDGGHHIIDASFGRIPDAEALSSELNSIPGVVEHGLFINMAALAIIAGPAGARTLQANR.

Substrate is bound by residues 28 to 31, 83 to 86, and 96 to 99; these read TGST, DGAD, and KGGG. Residue E105 is the Proton acceptor of the active site. K123 lines the substrate pocket.

It belongs to the ribose 5-phosphate isomerase family. Homodimer.

It catalyses the reaction aldehydo-D-ribose 5-phosphate = D-ribulose 5-phosphate. Its pathway is carbohydrate degradation; pentose phosphate pathway; D-ribose 5-phosphate from D-ribulose 5-phosphate (non-oxidative stage): step 1/1. Functionally, catalyzes the reversible conversion of ribose-5-phosphate to ribulose 5-phosphate. The sequence is that of Ribose-5-phosphate isomerase A from Rhizobium leguminosarum bv. trifolii (strain WSM2304).